The primary structure comprises 193 residues: Imidazoleglycerol-phosphate dehydratase (193 aa).

This sequence belongs to the imidazoleglycerol-phosphate dehydratase family.

Its subcellular location is the cytoplasm. The catalysed reaction is D-erythro-1-(imidazol-4-yl)glycerol 3-phosphate = 3-(imidazol-4-yl)-2-oxopropyl phosphate + H2O. Its pathway is amino-acid biosynthesis; L-histidine biosynthesis; L-histidine from 5-phospho-alpha-D-ribose 1-diphosphate: step 6/9. The polypeptide is Imidazoleglycerol-phosphate dehydratase (Methanoculleus marisnigri (strain ATCC 35101 / DSM 1498 / JR1)).